Reading from the N-terminus, the 597-residue chain is Probable translation initiation factor IF-2 (597 aa).

Residues 4–221 enclose the tr-type G domain; sequence IRQPIIAVLG…LIAGLSQKYL (218 aa). The segment at 13–20 is G1; it reads GHVDHGKT. GTP is bound at residue 13–20; it reads GHVDHGKT. Residues 38-42 form a G2 region; it reads GITQH. The interval 77-80 is G3; it reads DTPG. Residues 77 to 81 and 131 to 134 each bind GTP; these read DTPGH and NKID. Residues 131–134 form a G4 region; it reads NKID. Residues 199 to 201 are G5; it reads SAK.

The protein belongs to the TRAFAC class translation factor GTPase superfamily. Classic translation factor GTPase family. IF-2 subfamily.

In terms of biological role, function in general translation initiation by promoting the binding of the formylmethionine-tRNA to ribosomes. Seems to function along with eIF-2. This Thermococcus onnurineus (strain NA1) protein is Probable translation initiation factor IF-2.